The chain runs to 61 residues: Translational regulator CsrA (61 aa).

The protein belongs to the CsrA/RsmA family. In terms of assembly, homodimer; the beta-strands of each monomer intercalate to form a hydrophobic core, while the alpha-helices form wings that extend away from the core.

The protein resides in the cytoplasm. In terms of biological role, a key translational regulator that binds mRNA to regulate translation initiation and/or mRNA stability. Mediates global changes in gene expression, shifting from rapid growth to stress survival by linking envelope stress, the stringent response and the catabolite repression systems. Usually binds in the 5'-UTR; binding at or near the Shine-Dalgarno sequence prevents ribosome-binding, repressing translation, binding elsewhere in the 5'-UTR can activate translation and/or stabilize the mRNA. Its function is antagonized by small RNA(s). In Actinobacillus succinogenes (strain ATCC 55618 / DSM 22257 / CCUG 43843 / 130Z), this protein is Translational regulator CsrA.